Reading from the N-terminus, the 439-residue chain is tRNA modification GTPase MnmE (439 aa).

Residues Arg20, Glu78, and Lys116 each coordinate (6S)-5-formyl-5,6,7,8-tetrahydrofolate. Positions 211-364 constitute a TrmE-type G domain; sequence GIYVTILGEP…LLNLIKQKVE (154 aa). GTP-binding positions include 221 to 226, 240 to 246, and 265 to 268; these read NSGKST, SEYAGTT, and DTAG. 2 residues coordinate Mg(2+): Ser225 and Thr246. Lys439 provides a ligand contact to (6S)-5-formyl-5,6,7,8-tetrahydrofolate.

It belongs to the TRAFAC class TrmE-Era-EngA-EngB-Septin-like GTPase superfamily. TrmE GTPase family. In terms of assembly, homodimer. Heterotetramer of two MnmE and two MnmG subunits. K(+) serves as cofactor.

It is found in the cytoplasm. Its function is as follows. Exhibits a very high intrinsic GTPase hydrolysis rate. Involved in the addition of a carboxymethylaminomethyl (cmnm) group at the wobble position (U34) of certain tRNAs, forming tRNA-cmnm(5)s(2)U34. This is tRNA modification GTPase MnmE from Ehrlichia chaffeensis (strain ATCC CRL-10679 / Arkansas).